The chain runs to 142 residues: Prefoldin subunit alpha 2 (142 aa).

Belongs to the prefoldin subunit alpha family. As to quaternary structure, heterohexamer of two alpha and four beta subunits.

The protein resides in the cytoplasm. Functionally, molecular chaperone capable of stabilizing a range of proteins. Seems to fulfill an ATP-independent, HSP70-like function in archaeal de novo protein folding. The polypeptide is Prefoldin subunit alpha 2 (Thermococcus kodakarensis (strain ATCC BAA-918 / JCM 12380 / KOD1) (Pyrococcus kodakaraensis (strain KOD1))).